The sequence spans 121 residues: Large ribosomal subunit protein uL14c (121 aa).

Belongs to the universal ribosomal protein uL14 family. As to quaternary structure, part of the 50S ribosomal subunit.

It is found in the plastid. It localises to the chloroplast. Functionally, binds to 23S rRNA. In Oedogonium cardiacum (Filamentous green alga), this protein is Large ribosomal subunit protein uL14c.